The primary structure comprises 321 residues: Olfactory receptor 5P60 (321 aa).

Residues 1–28 are Extracellular-facing; that stretch reads MAFLHNGNHTAVTEFILLGLTDDPVLRI. Residue Asn8 is glycosylated (N-linked (GlcNAc...) asparagine). Residues 29-49 form a helical membrane-spanning segment; sequence VLFTIILCIYLVTVSGNLSTI. Residues 50–57 are Cytoplasmic-facing; the sequence is LLIRVSSQ. The chain crosses the membrane as a helical span at residues 58-78; that stretch reads LHHPMYFFLSHLASADIGYSS. Over 79 to 102 the chain is Extracellular; it reads SVTPNMLVNFLVKQNTISYIGCSI. A disulfide bridge links Cys100 with Cys192. The chain crosses the membrane as a helical span at residues 103–123; the sequence is QFGSAAFFGGLECFLLAVMAY. The Cytoplasmic portion of the chain corresponds to 124-136; the sequence is DRFVAICNPLLYS. Residues 137–157 traverse the membrane as a helical segment; it reads TKMSTQVCVQLVVGSYIGGFL. The Extracellular segment spans residues 158–199; the sequence is NASFATVSFLFLFFCGPNIINHFFCDFAPLIELSCSDVRISV. Residues 200 to 220 form a helical membrane-spanning segment; sequence LVTSFSAGTVTMLTVLVIAIS. Topologically, residues 221–240 are cytoplasmic; it reads YTYILITILKMRSTEGRHKA. A helical membrane pass occupies residues 241–261; sequence FSTCTSHLTAVSLFYGTITFI. Residues 262–274 lie on the Extracellular side of the membrane; it reads YVMPKSRYSTDQN. A helical transmembrane segment spans residues 275–295; it reads KVVSVFYMVVIPMLNPLIYSL. Over 296-321 the chain is Cytoplasmic; that stretch reads RNNEIKGALRRHLGKKIFSQSNILFY.

Belongs to the G-protein coupled receptor 1 family.

The protein localises to the cell membrane. Its function is as follows. Potential odorant receptor. The protein is Olfactory receptor 5P60 of Mus musculus (Mouse).